Here is a 152-residue protein sequence, read N- to C-terminus: Large ribosomal subunit protein bL9 (152 aa).

The protein belongs to the bacterial ribosomal protein bL9 family.

Functionally, binds to the 23S rRNA. This Picosynechococcus sp. (strain ATCC 27264 / PCC 7002 / PR-6) (Agmenellum quadruplicatum) protein is Large ribosomal subunit protein bL9.